The following is a 219-amino-acid chain: NADH-quinone oxidoreductase subunit C (219 aa).

Belongs to the complex I 30 kDa subunit family. In terms of assembly, NDH-1 is composed of 14 different subunits. Subunits NuoB, C, D, E, F, and G constitute the peripheral sector of the complex.

It localises to the cell inner membrane. The enzyme catalyses a quinone + NADH + 5 H(+)(in) = a quinol + NAD(+) + 4 H(+)(out). In terms of biological role, NDH-1 shuttles electrons from NADH, via FMN and iron-sulfur (Fe-S) centers, to quinones in the respiratory chain. The immediate electron acceptor for the enzyme in this species is believed to be ubiquinone. Couples the redox reaction to proton translocation (for every two electrons transferred, four hydrogen ions are translocated across the cytoplasmic membrane), and thus conserves the redox energy in a proton gradient. In Methylorubrum extorquens (strain PA1) (Methylobacterium extorquens), this protein is NADH-quinone oxidoreductase subunit C.